The sequence spans 361 residues: Tyrosine--tRNA ligase (361 aa).

Positions 36, 162, 166, 169, and 184 each coordinate L-tyrosine. The 'KMSKS' region motif lies at 235 to 239; sequence KMSKS. Lys238 contributes to the ATP binding site.

It belongs to the class-I aminoacyl-tRNA synthetase family. TyrS type 4 subfamily. Homodimer.

The protein localises to the cytoplasm. It carries out the reaction tRNA(Tyr) + L-tyrosine + ATP = L-tyrosyl-tRNA(Tyr) + AMP + diphosphate + H(+). Catalyzes the attachment of tyrosine to tRNA(Tyr) in a two-step reaction: tyrosine is first activated by ATP to form Tyr-AMP and then transferred to the acceptor end of tRNA(Tyr). The chain is Tyrosine--tRNA ligase from Sulfolobus acidocaldarius (strain ATCC 33909 / DSM 639 / JCM 8929 / NBRC 15157 / NCIMB 11770).